Reading from the N-terminus, the 207-residue chain is MSTMIMDLCSYTRLGLTGYLTSRGIKKQEIVEVNSAADLQKHCTSCCPAVVFLNEDCFVHDDESNGIIRQIITQNPATLFVIFMSLANIHFDRYLRVRKNLLISSKSITPKDLDVILVNYLKYKNTSVGQLTLPTLSLSKTESNMLQMWMAGHGTSQISTQMNIKAKTVSSHKGNIKKKIQTHNKQVIYHIVRLTENITSGIQVNMR.

Residues 131–196 (LTLPTLSLSK…VIYHIVRLTE (66 aa)) form the HTH luxR-type domain. The segment at residues 155–174 (TSQISTQMNIKAKTVSSHKG) is a DNA-binding region (H-T-H motif).

The protein belongs to the RcsA family.

In terms of biological role, component of the Rcs signaling system, which controls transcription of numerous genes. Binds to DNA to regulate expression of genes. This Klebsiella aerogenes (Enterobacter aerogenes) protein is Transcriptional regulatory protein RcsA.